We begin with the raw amino-acid sequence, 292 residues long: Probable E3 ubiquitin-protein ligase RNF144A (292 aa).

The tract at residues 16 to 236 (PLVSCKLCLG…YDKGPCRNKL (221 aa)) is TRIAD supradomain. Zn(2+) contacts are provided by cysteine 20, cysteine 23, cysteine 43, cysteine 46, cysteine 111, cysteine 116, cysteine 135, cysteine 138, cysteine 143, cysteine 146, histidine 151, cysteine 156, cysteine 185, and cysteine 188. The segment at 20 to 70 (CKLCLGEYTVEQMTTIAQCQCIFCTLCLKQYVELLIKEGLETAISCPDASC) adopts an RING-type 1 zinc-finger fold. An IBR-type zinc finger spans residues 91–156 (QKYKKLQFEK…KANWHPGQGC (66 aa)). Residues 185–214 (CPKCKVYIERDEGCAQMMCKNCKHAFCWYC) form an RING-type 2; atypical zinc finger. Cysteine 198 is an active-site residue. Zn(2+)-binding residues include cysteine 203, cysteine 206, cysteine 211, cysteine 214, histidine 226, and cysteine 232. A helical membrane pass occupies residues 250-270 (VVGIFAGFGLLLLVASPFLLL).

It belongs to the RBR family. RNF144 subfamily.

The protein localises to the membrane. It catalyses the reaction [E2 ubiquitin-conjugating enzyme]-S-ubiquitinyl-L-cysteine + [acceptor protein]-L-lysine = [E2 ubiquitin-conjugating enzyme]-L-cysteine + [acceptor protein]-N(6)-ubiquitinyl-L-lysine.. It participates in protein modification; protein ubiquitination. E3 ubiquitin-protein ligase which accepts ubiquitin from E2 ubiquitin-conjugating enzymes ube2l3 and ube2l6 in the form of a thioester and then directly transfers the ubiquitin to targeted substrates. In Xenopus tropicalis (Western clawed frog), this protein is Probable E3 ubiquitin-protein ligase RNF144A (rnf144a).